A 527-amino-acid chain; its full sequence is Bifunctional purine biosynthesis protein PurH (527 aa).

The MGS-like domain occupies Met1–Thr149.

This sequence belongs to the PurH family.

It carries out the reaction (6R)-10-formyltetrahydrofolate + 5-amino-1-(5-phospho-beta-D-ribosyl)imidazole-4-carboxamide = 5-formamido-1-(5-phospho-D-ribosyl)imidazole-4-carboxamide + (6S)-5,6,7,8-tetrahydrofolate. The catalysed reaction is IMP + H2O = 5-formamido-1-(5-phospho-D-ribosyl)imidazole-4-carboxamide. Its pathway is purine metabolism; IMP biosynthesis via de novo pathway; 5-formamido-1-(5-phospho-D-ribosyl)imidazole-4-carboxamide from 5-amino-1-(5-phospho-D-ribosyl)imidazole-4-carboxamide (10-formyl THF route): step 1/1. The protein operates within purine metabolism; IMP biosynthesis via de novo pathway; IMP from 5-formamido-1-(5-phospho-D-ribosyl)imidazole-4-carboxamide: step 1/1. The protein is Bifunctional purine biosynthesis protein PurH of Stenotrophomonas maltophilia (strain K279a).